The primary structure comprises 203 residues: Dephospho-CoA kinase (203 aa).

Residues 10-203 (IIGITGNIGS…LTGGAKGGRG (194 aa)) enclose the DPCK domain. Position 18–23 (18–23 (GSGKST)) interacts with ATP.

This sequence belongs to the CoaE family.

It is found in the cytoplasm. It carries out the reaction 3'-dephospho-CoA + ATP = ADP + CoA + H(+). It functions in the pathway cofactor biosynthesis; coenzyme A biosynthesis; CoA from (R)-pantothenate: step 5/5. In terms of biological role, catalyzes the phosphorylation of the 3'-hydroxyl group of dephosphocoenzyme A to form coenzyme A. This is Dephospho-CoA kinase from Thermus thermophilus (strain ATCC BAA-163 / DSM 7039 / HB27).